Here is a 437-residue protein sequence, read N- to C-terminus: MLTAFARAFKTPDLRKKLLFTLGIIVIYRIGTHIPIPGVDYSAVQFCIDQTKSNSGLFGLVNMFSGGALLQITIFALGIMPYITASIILQLLTVVIPRLEALKKEGQSGTAKITQYTRYLTVALAVLQGTGLVATARSGALFSQCPQANNIVPDDSIFTTLTMVVTMTAGTAVVMWLGELITDRGIGNGMSILMFISIAATFPSALWSIKEQGDLAGGWIEFGIVIAVGLVMVALVVFVEQAQRRIPVQYAKRMIGRRSYGGTSTYIPLKVNQAGIIPVIFASSLLYIPALVVQFSGSTAGWAAWIQKNLADTAAPAHITVYFFLIIFFAFFYVAISFNPEEVADNMKKYGGFIPGIRAGRPTAEYLSYVLNRITWPGSLYLGLIALVPTMALAPLGANQNFPFGGTSILIIVGVGLETVKQIESQLQQRNYEGFLR.

Helical transmembrane passes span 19 to 39 (LFTL…IPGV), 69 to 89 (LLQI…SIIL), 122 to 142 (VALA…GALF), 157 to 177 (IFTT…VMWL), 189 to 209 (GMSI…LWSI), 219 to 239 (WIEF…VVFV), 275 to 295 (GIIP…VVQF), 318 to 338 (HITV…AISF), 378 to 398 (GSLY…PLGA), and 400 to 420 (QNFP…LETV).

This sequence belongs to the SecY/SEC61-alpha family. As to quaternary structure, component of the Sec protein translocase complex. Heterotrimer consisting of SecY, SecE and SecG subunits. The heterotrimers can form oligomers, although 1 heterotrimer is thought to be able to translocate proteins. Interacts with the ribosome. Interacts with SecDF, and other proteins may be involved. Interacts with SecA.

The protein resides in the cell membrane. The central subunit of the protein translocation channel SecYEG. Consists of two halves formed by TMs 1-5 and 6-10. These two domains form a lateral gate at the front which open onto the bilayer between TMs 2 and 7, and are clamped together by SecE at the back. The channel is closed by both a pore ring composed of hydrophobic SecY resides and a short helix (helix 2A) on the extracellular side of the membrane which forms a plug. The plug probably moves laterally to allow the channel to open. The ring and the pore may move independently. The polypeptide is Protein translocase subunit SecY (Streptomyces scabiei).